We begin with the raw amino-acid sequence, 243 residues long: Zinc import ATP-binding protein ZnuC (243 aa).

Residues 4 to 219 (IAAHHLAVRR…PEYRALFGHG (216 aa)) form the ABC transporter domain. Position 36–43 (36–43 (GPNGSGKS)) interacts with ATP.

The protein belongs to the ABC transporter superfamily. Zinc importer (TC 3.A.1.15.5) family. The complex is composed of two ATP-binding proteins (ZnuC), two transmembrane proteins (ZnuB) and a solute-binding protein (ZnuA).

The protein localises to the cell inner membrane. It carries out the reaction Zn(2+)(out) + ATP(in) + H2O(in) = Zn(2+)(in) + ADP(in) + phosphate(in) + H(+)(in). Functionally, part of the ABC transporter complex ZnuABC involved in zinc import. Responsible for energy coupling to the transport system. The chain is Zinc import ATP-binding protein ZnuC from Cereibacter sphaeroides (strain ATCC 17023 / DSM 158 / JCM 6121 / CCUG 31486 / LMG 2827 / NBRC 12203 / NCIMB 8253 / ATH 2.4.1.) (Rhodobacter sphaeroides).